A 116-amino-acid chain; its full sequence is Dynein light chain Tctex-type 3 (116 aa).

A 3'-nitrotyrosine modification is found at tyrosine 4.

Belongs to the dynein light chain Tctex-type family. Homodimer. The cytoplasmic dynein 1 complex consists of two catalytic heavy chains (HCs) and a number of non-catalytic subunits presented by intermediate chains (ICs), light intermediate chains (LICs) and light chains (LCs); the composition seems to vary in respect to the IC, LIC and LC composition. The heavy chain homodimer serves as a scaffold for the probable homodimeric assembly of the respective non-catalytic subunits. The ICs and LICs bind directly to the HC dimer and the LCs assemble on the IC dimer. DYNLT1 and DYNLT3 compete for association with dynein IC (DYNC1I1 or DYNC1I2). Self-associates. Interacts with DYNC1I1 and DYNC1I2. Interacts with BUB3. Interacts with SATB1 in nucleus to form complex with matrix attachment regions (MARs) of DNA.

The protein resides in the nucleus. The protein localises to the cytoplasm. It localises to the cytoskeleton. Its subcellular location is the chromosome. It is found in the centromere. The protein resides in the kinetochore. In terms of biological role, acts as one of several non-catalytic accessory components of the cytoplasmic dynein 1 complex that are thought to be involved in linking dynein to cargos and to adapter proteins that regulate dynein function. Cytoplasmic dynein 1 acts as a motor for the intracellular retrograde motility of vesicles and organelles along microtubules. Probably binds BUB3 as part of transport cargo. Required for the efficient progression through mitosis. The sequence is that of Dynein light chain Tctex-type 3 (Dynlt3) from Mus musculus (Mouse).